A 273-amino-acid polypeptide reads, in one-letter code: Bis(5'-nucleosyl)-tetraphosphatase, symmetrical (273 aa).

Belongs to the Ap4A hydrolase family.

It catalyses the reaction P(1),P(4)-bis(5'-adenosyl) tetraphosphate + H2O = 2 ADP + 2 H(+). In terms of biological role, hydrolyzes diadenosine 5',5'''-P1,P4-tetraphosphate to yield ADP. The sequence is that of Bis(5'-nucleosyl)-tetraphosphatase, symmetrical from Proteus mirabilis (strain HI4320).